Here is a 210-residue protein sequence, read N- to C-terminus: tRNA (guanine-N(7)-)-methyltransferase (210 aa).

S-adenosyl-L-methionine-binding residues include Glu36, Glu61, Asp90, and Asp112. Asp112 is an active-site residue. Substrate-binding positions include Lys116, Asp148, and 188–191 (TEYE).

The protein belongs to the class I-like SAM-binding methyltransferase superfamily. TrmB family.

The enzyme catalyses guanosine(46) in tRNA + S-adenosyl-L-methionine = N(7)-methylguanosine(46) in tRNA + S-adenosyl-L-homocysteine. It participates in tRNA modification; N(7)-methylguanine-tRNA biosynthesis. Functionally, catalyzes the formation of N(7)-methylguanine at position 46 (m7G46) in tRNA. This is tRNA (guanine-N(7)-)-methyltransferase from Mycoplasma genitalium (strain ATCC 33530 / DSM 19775 / NCTC 10195 / G37) (Mycoplasmoides genitalium).